Here is a 273-residue protein sequence, read N- to C-terminus: Putative inactive beta-glucuronidase protein GUSBP11 (273 aa).

The segment at 1–20 (MTAAETGRGKPRLGGGSGLG) is disordered.

It belongs to the glycosyl hydrolase 2 family.

The protein is Putative inactive beta-glucuronidase protein GUSBP11 (GUSBP11) of Homo sapiens (Human).